Reading from the N-terminus, the 169-residue chain is Lipoprotein signal peptidase (169 aa).

Helical transmembrane passes span 1 to 21 (MPES…LILV), 68 to 88 (WQRW…VVWL), and 94 to 114 (HETL…GNLY). Residues Asp-124 and Asp-143 contribute to the active site. Residues 135–155 (FFPAFNLADTFITIGAILLAL) traverse the membrane as a helical segment.

The protein belongs to the peptidase A8 family.

The protein localises to the cell inner membrane. It catalyses the reaction Release of signal peptides from bacterial membrane prolipoproteins. Hydrolyzes -Xaa-Yaa-Zaa-|-(S,diacylglyceryl)Cys-, in which Xaa is hydrophobic (preferably Leu), and Yaa (Ala or Ser) and Zaa (Gly or Ala) have small, neutral side chains.. It functions in the pathway protein modification; lipoprotein biosynthesis (signal peptide cleavage). In terms of biological role, this protein specifically catalyzes the removal of signal peptides from prolipoproteins. This Ectopseudomonas mendocina (strain ymp) (Pseudomonas mendocina) protein is Lipoprotein signal peptidase.